The following is a 348-amino-acid chain: Eukaryotic translation initiation factor 3 subunit H (348 aa).

The 135-residue stretch at 35-169 (VQIDGLVVLK…LKAYRLTPKL (135 aa)) folds into the MPN domain. The segment covering 267-285 (QQQKHQYQQRRQQENIQRQ) has biased composition (low complexity). The tract at residues 267–311 (QQQKHQYQQRRQQENIQRQSRGEPPLPEEDINKLFKPPQPPPRME) is disordered.

The protein belongs to the eIF-3 subunit H family. In terms of assembly, component of the eukaryotic translation initiation factor 3 (eIF-3) complex, which is composed of 13 subunits: EIF3A, EIF3B, EIF3C, EIF3D, EIF3E, EIF3F, EIF3G, EIF3H, EIF3I, EIF3J, EIF3K, EIF3L and EIF3M.

The protein localises to the cytoplasm. Its function is as follows. Component of the eukaryotic translation initiation factor 3 (eIF-3) complex, which is involved in protein synthesis of a specialized repertoire of mRNAs and, together with other initiation factors, stimulates binding of mRNA and methionyl-tRNAi to the 40S ribosome. The eIF-3 complex specifically targets and initiates translation of a subset of mRNAs involved in cell proliferation. The chain is Eukaryotic translation initiation factor 3 subunit H from Taeniopygia guttata (Zebra finch).